Consider the following 115-residue polypeptide: Large ribosomal subunit protein bL19 (115 aa).

It belongs to the bacterial ribosomal protein bL19 family.

This protein is located at the 30S-50S ribosomal subunit interface and may play a role in the structure and function of the aminoacyl-tRNA binding site. This Salmonella choleraesuis (strain SC-B67) protein is Large ribosomal subunit protein bL19.